The sequence spans 285 residues: Protease HtpX homolog (285 aa).

Transmembrane regions (helical) follow at residues T7 to G27 and G30 to D50. H131 contributes to the Zn(2+) binding site. Residue E132 is part of the active site. H135 contributes to the Zn(2+) binding site. Transmembrane regions (helical) follow at residues I146–G166 and I177–I197. E202 serves as a coordination point for Zn(2+).

Belongs to the peptidase M48B family. Requires Zn(2+) as cofactor.

Its subcellular location is the cell inner membrane. The chain is Protease HtpX homolog from Burkholderia multivorans (strain ATCC 17616 / 249).